We begin with the raw amino-acid sequence, 166 residues long: MRLILLSGLLLLGTFLVNGHDADPEGEVLNSVLLTLMKLQKEFTNLFHAFLTVHKARSFGSGSERLYVSNKEIKNFEALKVICKQAGGQIPSPQLENQNKAFANVLERHNKEAFLVVGDSGNFTNWAAGQPNKADGTCVKADKQGFCHSTSCDDNLLVVCEFYFIL.

Residues 1–19 (MRLILLSGLLLLGTFLVNG) form the signal peptide. Residues 46–161 (LFHAFLTVHK…CDDNLLVVCE (116 aa)) form the C-type lectin domain. Cystine bridges form between Cys-83-Cys-160 and Cys-138-Cys-152. The N-linked (GlcNAc...) asparagine glycan is linked to Asn-122.

It belongs to the alpha-type phospholipase A2 inhibitor family. As to quaternary structure, homotrimer; non-covalently linked. As to expression, expressed by the liver.

The protein resides in the secreted. Its function is as follows. This phospholipase A2 inhibitor binds directly phospholipase A2 in the presence or absence of calcium. The polypeptide is Phospholipase A2 inhibitor B1 (Crotalus durissus terrificus (South American rattlesnake)).